The chain runs to 88 residues: UPF0335 protein MexAM1_META1p2947 (88 aa).

Belongs to the UPF0335 family.

In Methylorubrum extorquens (strain ATCC 14718 / DSM 1338 / JCM 2805 / NCIMB 9133 / AM1) (Methylobacterium extorquens), this protein is UPF0335 protein MexAM1_META1p2947.